The chain runs to 300 residues: Iron/alpha-ketoglutarate-dependent dioxygenase okaE (300 aa).

Fe cation-binding residues include H134, D136, and H210.

Belongs to the PhyH family. Homodimer. Requires Fe cation as cofactor.

The enzyme catalyses okaramine A + 2-oxoglutarate + AH2 + O2 = 12-deshydroxyl okaramine E + succinate + A + CO2 + H2O. The catalysed reaction is 12-deshydroxyl okaramine E + 2-oxoglutarate + O2 = okaramine E + succinate + CO2. It carries out the reaction okaramine A + 2-oxoglutarate + O2 = okaramine E + succinate + CO2. It functions in the pathway alkaloid biosynthesis. Its pathway is secondary metabolite biosynthesis; terpenoid biosynthesis. Its function is as follows. Iron/alpha-ketoglutarate-dependent dioxygenase; part of the gene cluster that mediates the biosynthesis of okaramine B, a prenylated indole alkaloid that possesses an unusual octacyclic ring system, including a four-membered azetidine ring and an eight-membered azocine ring, and that exhibits insecticidal activity against silkworm larvae. Within the pathway, okaE forms the unusual 2-dimethyl-3-methyl-azetidine ring to yield 12-deshydroxyl okaramine E from okaramine A. OkaE also catalyzes the hydroxylation of 12-deshydroxyl okaramine E to produce okaramine E. The biosynthesis begins with the NRPS okaA that condenses two tryptophan molecules into cyclo(L-Trp-L-Trp). Prenylation by the prenyltransferase okaC then leads to the formation of cyclo(N8-(alpha,alpha-dimethylallyl)-L-Trp-6a-(alpha,alpha-dime-thylallyl)-L-Trp). This is followed by indole 2,3-epoxidation by the FAD-dependent monooxygenase okaB to facilitate the formation of the hexahydropyrrolo[2,3-b]indole (HPI) moiety of okaramine C. The cytochrome P450 monooxygenase okaD then likely catalyzes formation of the eight-membered ring of okaramine A. The dioxygenase okaE further forms the unusual 2-dimethyl-3-methyl-azetidine ring to yield 12-deshydroxyl okaramine E, as well as the hydroxylation of 12-deshydroxyl okaramine E to produce okaramine E. The cytochrome P450 monoxygenase okaG converts 12-deshydroxyl okaramine E into 3-desmethyl okaramine B which is further methylated by the methyltransferase okaF into okaramine B. In a shunt pathway, okaG and okaF together are also able to convert okaramine E into okaramine D. Okaramine H is produced by nonenzymatic conversion from okaramine A. The polypeptide is Iron/alpha-ketoglutarate-dependent dioxygenase okaE (Penicillium ochrochloron).